The sequence spans 279 residues: MKFVGAHVSASGGVDQAVIRAHELEATAFALFTKNQRQWKAAPLPADVIDKFKSACAQYGYGPGQILPHDSYLINLGHPVTEALEKSREAFLDEMQRCEQLGLTLLNFHPGSHLMQIDEDKCLARIAESINLVLDKTSGVTAVIENTAGQGSNLGFKFEHLAAIIDGVEDKSRVGVCIDTCHAFAAGYDLRTEETCEQTFKELGEVVGFNYLRGMHLNDAKSEFGSRVDRHHSLGEGNIGKTVFSYIMRDPRFDKIPLILETVNPDIWAEEIAWLKAQQ.

The Zn(2+) site is built by His69, His109, Glu145, Asp179, His182, His216, Asp229, His231, and Glu261.

It belongs to the AP endonuclease 2 family. Requires Zn(2+) as cofactor.

The catalysed reaction is Endonucleolytic cleavage to 5'-phosphooligonucleotide end-products.. Endonuclease IV plays a role in DNA repair. It cleaves phosphodiester bonds at apurinic or apyrimidinic (AP) sites, generating a 3'-hydroxyl group and a 5'-terminal sugar phosphate. The polypeptide is Probable endonuclease 4 (Serratia proteamaculans (strain 568)).